The chain runs to 314 residues: Glutathione synthetase (314 aa).

The ATP-grasp domain occupies 125-311 (EKLAAQLFPQ…IAGQLFDAIE (187 aa)). 151–208 (FVQKQEQAILKPLDGMGGHSIFRSSNGDPNLNVILETLTDGGRTLAIAQRYLQQIIEG) serves as a coordination point for ATP. Mg(2+) contacts are provided by E282 and N284.

It belongs to the prokaryotic GSH synthase family. Requires Mg(2+) as cofactor. The cofactor is Mn(2+).

It catalyses the reaction gamma-L-glutamyl-L-cysteine + glycine + ATP = glutathione + ADP + phosphate + H(+). Its pathway is sulfur metabolism; glutathione biosynthesis; glutathione from L-cysteine and L-glutamate: step 2/2. This is Glutathione synthetase from Xylella fastidiosa (strain 9a5c).